The primary structure comprises 272 residues: Bis(5'-nucleosyl)-tetraphosphatase, symmetrical (272 aa).

The protein belongs to the Ap4A hydrolase family.

The enzyme catalyses P(1),P(4)-bis(5'-adenosyl) tetraphosphate + H2O = 2 ADP + 2 H(+). Hydrolyzes diadenosine 5',5'''-P1,P4-tetraphosphate to yield ADP. This chain is Bis(5'-nucleosyl)-tetraphosphatase, symmetrical, found in Wigglesworthia glossinidia brevipalpis.